Here is a 367-residue protein sequence, read N- to C-terminus: DNA replication and repair protein RecF (367 aa).

30–37 serves as a coordination point for ATP; it reads GENAQGKT.

The protein belongs to the RecF family.

The protein localises to the cytoplasm. Functionally, the RecF protein is involved in DNA metabolism; it is required for DNA replication and normal SOS inducibility. RecF binds preferentially to single-stranded, linear DNA. It also seems to bind ATP. The polypeptide is DNA replication and repair protein RecF (Chlamydia caviae (strain ATCC VR-813 / DSM 19441 / 03DC25 / GPIC) (Chlamydophila caviae)).